The following is a 519-amino-acid chain: Glycerophosphoinositol permease 1 (519 aa).

The segment at 1–32 (MSDLVKSSEVIETTEVPPHNNNNNKRHFKYDS) is disordered. The chain crosses the membrane as a helical span at residues 39 to 59 (LAGGVKLKDALMILCAGFALI). N-linked (GlcNAc...) asparagine glycosylation occurs at Asn93. A run of 3 helical transmembrane segments spans residues 94–114 (ASLV…DYIG), 117–137 (WSIV…AASH), and 141–161 (VNGM…GIGA). The N-linked (GlcNAc...) asparagine glycan is linked to Asn175. A run of 8 helical transmembrane segments spans residues 186 to 206 (ILAT…IFLI), 216 to 236 (DAIW…VFYF), 273 to 293 (VAWF…AGII), 313 to 333 (LLLG…VDIL), 337 to 357 (YTMM…GCGY), 363 to 383 (ITGL…FGPG), 404 to 424 (GISA…FSPI), and 432 to 452 (WTFI…FIFI). Residues 487–500 (EEEDLEGSSEDSSD) show a composition bias toward acidic residues. Residues 487 to 519 (EEEDLEGSSEDSSDGEIVKNNTKNDVEKVDALK) form a disordered region. N-linked (GlcNAc...) asparagine glycosylation is present at Asn506. Positions 508 to 519 (TKNDVEKVDALK) are enriched in basic and acidic residues.

This sequence belongs to the major facilitator superfamily. Sugar transporter (TC 2.A.1.1) family.

It is found in the cell membrane. It carries out the reaction sn-glycero-3-phospho-1D-myo-inositol(out) = sn-glycero-3-phospho-1D-myo-inositol(in). Glycerophosphodiester transporter that mediates uptake of glycerophosphoinositol (GroPIns) as a source of inositol and phosphate. Does not possess detectable glycerophosphocholine (GroPCho) transport activity. Although no glycerophosphoinositol transport activity occurs in the absence of GIT1, C.albicans is still able to use glycerophosphoinositol as a phosphate source at pH 7.5, albeit slowly. Thus, a second, GIT1-independent, mechanism must exist for utilizing glycerophosphoinositol as a phosphate source at physiological pH. The expanded ability to utilize GroPIns and GroPCho results from the organism's pathogenic nature and its need to occupy a variety of environments within its host organism. This possibility is buttressed by the fact that GroPIns and GroPCho are present and abundant in human fluids. This chain is Glycerophosphoinositol permease 1, found in Candida albicans (strain SC5314 / ATCC MYA-2876) (Yeast).